The chain runs to 109 residues: FK506-binding protein (109 aa).

One can recognise a PPIase FKBP-type domain in the interval 20 to 108 (GKEITVHYTG…IFEVELLKVY (89 aa)).

It belongs to the FKBP-type PPIase family.

It carries out the reaction [protein]-peptidylproline (omega=180) = [protein]-peptidylproline (omega=0). Inhibited by FK506. Its function is as follows. PPIases accelerate the folding of proteins. The polypeptide is FK506-binding protein (fbp) (Neisseria meningitidis serogroup A / serotype 4A (strain DSM 15465 / Z2491)).